An 82-amino-acid polypeptide reads, in one-letter code: MTDKIRTLQGRVISDKMEKSITVAIERKVKHPIYGKIIKRTTKLHVHDENNECKAGDLVEIRECRPLSKTKSWTLVAILEKA.

This sequence belongs to the universal ribosomal protein uS17 family. Part of the 30S ribosomal subunit.

Functionally, one of the primary rRNA binding proteins, it binds specifically to the 5'-end of 16S ribosomal RNA. This is Small ribosomal subunit protein uS17 from Aeromonas salmonicida (strain A449).